A 307-amino-acid chain; its full sequence is Lipoyl synthase (307 aa).

7 residues coordinate [4Fe-4S] cluster: C55, C60, C66, C81, C85, C88, and S292. In terms of domain architecture, Radical SAM core spans 67–281 (WEDREATFLI…ARHAEELGFS (215 aa)).

Belongs to the radical SAM superfamily. Lipoyl synthase family. The cofactor is [4Fe-4S] cluster.

Its subcellular location is the cytoplasm. The enzyme catalyses [[Fe-S] cluster scaffold protein carrying a second [4Fe-4S](2+) cluster] + N(6)-octanoyl-L-lysyl-[protein] + 2 oxidized [2Fe-2S]-[ferredoxin] + 2 S-adenosyl-L-methionine + 4 H(+) = [[Fe-S] cluster scaffold protein] + N(6)-[(R)-dihydrolipoyl]-L-lysyl-[protein] + 4 Fe(3+) + 2 hydrogen sulfide + 2 5'-deoxyadenosine + 2 L-methionine + 2 reduced [2Fe-2S]-[ferredoxin]. The protein operates within protein modification; protein lipoylation via endogenous pathway; protein N(6)-(lipoyl)lysine from octanoyl-[acyl-carrier-protein]: step 2/2. Catalyzes the radical-mediated insertion of two sulfur atoms into the C-6 and C-8 positions of the octanoyl moiety bound to the lipoyl domains of lipoate-dependent enzymes, thereby converting the octanoylated domains into lipoylated derivatives. The polypeptide is Lipoyl synthase (Mycolicibacterium paratuberculosis (strain ATCC BAA-968 / K-10) (Mycobacterium paratuberculosis)).